The primary structure comprises 254 residues: Isoprenyl transferase (254 aa).

The active site involves D34. Residue D34 participates in Mg(2+) binding. Substrate is bound by residues 35–38, W39, R47, H51, and 79–81; these read GNGR and STE. The active-site Proton acceptor is the N82. Residues W83, R85, R202, and 208–210 contribute to the substrate site; that span reads RIS. Residue E221 coordinates Mg(2+).

Belongs to the UPP synthase family. Homodimer. Mg(2+) is required as a cofactor.

Its function is as follows. Catalyzes the condensation of isopentenyl diphosphate (IPP) with allylic pyrophosphates generating different type of terpenoids. This chain is Isoprenyl transferase, found in Staphylococcus saprophyticus subsp. saprophyticus (strain ATCC 15305 / DSM 20229 / NCIMB 8711 / NCTC 7292 / S-41).